We begin with the raw amino-acid sequence, 358 residues long: UPF0725 protein At4g29550 (358 aa).

Residues 31–82 (LNKHPPSGSGWTDEDDDNDDVFSSSFISKEELSDAVHNDPPSGWTDEDDDDQ) are disordered. Over residues 58-67 (SKEELSDAVH) the composition is skewed to basic and acidic residues.

Belongs to the UPF0725 (EMB2204) family.

This chain is UPF0725 protein At4g29550, found in Arabidopsis thaliana (Mouse-ear cress).